A 242-amino-acid chain; its full sequence is MGVEKVPKYDIPTKKVDYVFIELDKMKPHEQLVQKELEAFIESVTGSGIFWKPMLLAKVPGEDMYLIVDGHHRWAGLQKLGAKRAPSVILDYFSDDVKVYTWYPAFKGDLNEVVERLKKEGLEVIEDPEAEEKAERGEIAFALVGEKSFAIPGGLEEQKKVSKVLDEMSVEGKIELIYYGLKEDAREDMAKGEIDYVFIRKAPTKEEVMELVKRGEVYSPKTTRHVLPFNPDKIDVKLEELF.

The active site involves glutamate 30. ADP is bound by residues serine 43, isoleucine 49, tryptophan 51, and lysine 52. Residue valine 68 participates in O-phospho-L-serine binding. Residues aspartate 69, glycine 70, histidine 71, histidine 72, and arginine 73 each coordinate ADP. Aspartate 69 is a binding site for Mg(2+). Residues glycine 70, histidine 71, and histidine 72 each coordinate O-phospho-L-serine. O-phospho-L-serine-binding residues include tryptophan 102, lysine 221, threonine 223, and histidine 225.

The protein belongs to the SerK family. Requires Mg(2+) as cofactor.

The catalysed reaction is L-serine + ADP = O-phospho-L-serine + AMP + H(+). The protein operates within amino-acid biosynthesis; L-cysteine biosynthesis; L-cysteine from L-serine: step 1/2. Its function is as follows. Free serine kinase that uses ADP to phosphorylate L-serine to yield O-phospho-L-serine and AMP. This chain is ADP-dependent L-serine kinase SerK, found in Thermococcus kodakarensis (strain ATCC BAA-918 / JCM 12380 / KOD1) (Pyrococcus kodakaraensis (strain KOD1)).